The sequence spans 346 residues: KH domain-containing, RNA-binding, signal transduction-associated protein 3 (346 aa).

Positions 1-160 are involved in homodimerization; that stretch reads MEEKYLPELM…IKKFLIPDYN (160 aa). Residue Lys-4 forms a Glycyl lysine isopeptide (Lys-Gly) (interchain with G-Cter in SUMO2) linkage. Residues 61–127 form the KH domain; it reads LIPVKQFPKF…AKYFHLNDDL (67 aa). Disordered stretches follow at residues 212 to 266 and 317 to 346; these read RPVA…QETY and GQEE…YGRY. A compositionally biased stretch (pro residues) spans 253–262; the sequence is GYRPPPPPPT.

This sequence belongs to the KHDRBS family. In terms of assembly, self-associates to form homooligomers; dimerization increases RNA affinity. Interacts with KHDRBS2/SLM-1. Interacts with KHDRBS1/SAM68; heterooligomer formation of KHDRBS family proteins may modulate RNA substrate specificity. Interacts with the splicing regulatory proteins SFRS9, SAFB and YTHDC1. Interacts with HNRPL, RBMX, p85 subunit of PI3-kinase, SERPINB5. Post-translationally, phosphorylated on tyrosine residues by PTK6. In terms of tissue distribution, highly expressed in testis and brain. In adult cerebellum expressed predominantly in internal granular layer interneurons and in hippocampus is exclusively expressed in CA neurons; expression is restricted to neuronal subpopulations largely non-overlapping with expression of KHDRBS2/SLM-1.

It is found in the nucleus. In terms of biological role, RNA-binding protein that plays a role in the regulation of alternative splicing and influences mRNA splice site selection and exon inclusion. Binds preferentially to the 5'-[AU]UAAA-3' motif in vitro. Binds optimally to RNA containing 5'-[AU]UAA-3' as a bipartite motif spaced by more than 15 nucleotides. Binds poly(A). RNA-binding abilities are down-regulated by tyrosine kinase PTK6. Involved in splice site selection of vascular endothelial growth factor. In vitro regulates CD44 alternative splicing by direct binding to purine-rich exonic enhancer. Can regulate alternative splicing of neurexins NRXN1-3 in the laminin G-like domain 6 containing the evolutionary conserved neurexin alternative spliced segment 4 (AS4) involved in neurexin selective targeting to postsynaptic partners such as neuroligins and LRRTM family members. High concentrations in forebrain structures block splicing inclusion of NRXN1-3 AS4 exons while low concentrations favor their inclusion. Targeted, cell-type specific splicing regulation of NRXN1 at AS4 is involved in neuronal glutamatergic synapse function and plasticity and is linked to behavioral aspects. Regulates expression of KHDRBS2/SLIM-1 in defined neuron populations in the hippocampus by modifying its alternative splicing resulting in a transcript predicted to undergo nonsense-mediated decay. Can bind FABP9 mRNA. May play a role as a negative regulator of cell growth. Inhibits cell proliferation. This Mus musculus (Mouse) protein is KH domain-containing, RNA-binding, signal transduction-associated protein 3 (Khdrbs3).